The primary structure comprises 372 residues: Carbamoyl phosphate synthase small chain (372 aa).

Positions 1–186 are CPSase; the sequence is MTYCKRGTEG…IHQNNSPDII (186 aa). The L-glutamine site is built by Ser-52, Gly-233, and Gly-235. Residues 185–372 form the Glutamine amidotransferase type-1 domain; that stretch reads IIVLVDCGIK…KKMVIKDEGN (188 aa). Residue Cys-261 is the Nucleophile of the active site. Positions 262, 265, 303, 305, and 306 each coordinate L-glutamine. Active-site residues include His-345 and Glu-347.

This sequence belongs to the CarA family. Composed of two chains; the small (or glutamine) chain promotes the hydrolysis of glutamine to ammonia, which is used by the large (or ammonia) chain to synthesize carbamoyl phosphate. Tetramer of heterodimers (alpha,beta)4.

It carries out the reaction hydrogencarbonate + L-glutamine + 2 ATP + H2O = carbamoyl phosphate + L-glutamate + 2 ADP + phosphate + 2 H(+). The enzyme catalyses L-glutamine + H2O = L-glutamate + NH4(+). It participates in amino-acid biosynthesis; L-arginine biosynthesis; carbamoyl phosphate from bicarbonate: step 1/1. The protein operates within pyrimidine metabolism; UMP biosynthesis via de novo pathway; (S)-dihydroorotate from bicarbonate: step 1/3. Functionally, small subunit of the glutamine-dependent carbamoyl phosphate synthetase (CPSase). CPSase catalyzes the formation of carbamoyl phosphate from the ammonia moiety of glutamine, carbonate, and phosphate donated by ATP, constituting the first step of 2 biosynthetic pathways, one leading to arginine and/or urea and the other to pyrimidine nucleotides. The small subunit (glutamine amidotransferase) binds and cleaves glutamine to supply the large subunit with the substrate ammonia. This Metallosphaera sedula (strain ATCC 51363 / DSM 5348 / JCM 9185 / NBRC 15509 / TH2) protein is Carbamoyl phosphate synthase small chain.